Consider the following 105-residue polypeptide: MSLKSWHPQSKTKRVGASEGNPQWGSGSMEAPLLSSFLPPLASEAELTGNTWFLHRCSCILNLEESMDSDWGAWWGVSLPRRAPFLIYGSDGPWCTQAGFPGWGH.

The tract at residues Met-1–Gly-27 is disordered.

This is an uncharacterized protein from Homo sapiens (Human).